A 337-amino-acid polypeptide reads, in one-letter code: uncharacterized protein (337 aa).

The region spanning 5–235 is the ABC transporter domain; the sequence is VEFDNVSRLY…PRTPFVAGFV (231 aa). 37 to 44 contributes to the ATP binding site; that stretch reads GPSGSGKT.

It belongs to the ABC transporter superfamily.

In terms of biological role, probably part of the ABC transporter complex YdcSTUV. Probably responsible for energy coupling to the transport system. This is an uncharacterized protein from Escherichia coli (strain K12).